The following is an 811-amino-acid chain: Bifunctional enzyme MurC/Ddl (811 aa).

The tract at residues 1–450 (MNRKNHYHFI…GNALKDFEPK (450 aa)) is UDP-N-acetylmuramate--alanine ligase. Residues 111–117 (GSHGKTT) and 607–662 (LETF…SREI) each bind ATP. The tract at residues 451 to 811 (KLSVGVVCGG…NKQCLLTAKS (361 aa)) is D-alanine--D-alanine ligase. Residues 574–785 (KRLAASVGVP…FEQIVHQLII (212 aa)) enclose the ATP-grasp domain. The Mg(2+) site is built by aspartate 739, glutamate 752, and asparagine 754.

In the N-terminal section; belongs to the MurCDEF family. It in the C-terminal section; belongs to the D-alanine--D-alanine ligase family. Mg(2+) is required as a cofactor. Requires Mn(2+) as cofactor.

The protein localises to the cytoplasm. The catalysed reaction is UDP-N-acetyl-alpha-D-muramate + L-alanine + ATP = UDP-N-acetyl-alpha-D-muramoyl-L-alanine + ADP + phosphate + H(+). It catalyses the reaction 2 D-alanine + ATP = D-alanyl-D-alanine + ADP + phosphate + H(+). It participates in cell wall biogenesis; peptidoglycan biosynthesis. The protein is Bifunctional enzyme MurC/Ddl (murC/ddlA) of Chlamydia caviae (strain ATCC VR-813 / DSM 19441 / 03DC25 / GPIC) (Chlamydophila caviae).